Reading from the N-terminus, the 331-residue chain is D-alanine--D-alanine ligase (331 aa).

In terms of domain architecture, ATP-grasp spans 122-328 (KLWYDAIGIP…FHEFLADCIE (207 aa)). 152–207 (AFDKWGKLFVKAARQGSSVGCYSVTNIEQLSDAIDKAFGFSHQVLVEKAVKPRELE) contributes to the ATP binding site. Aspartate 282, glutamate 295, and asparagine 297 together coordinate Mg(2+).

The protein belongs to the D-alanine--D-alanine ligase family. Requires Mg(2+) as cofactor. Mn(2+) is required as a cofactor.

Its subcellular location is the cytoplasm. The enzyme catalyses 2 D-alanine + ATP = D-alanyl-D-alanine + ADP + phosphate + H(+). The protein operates within cell wall biogenesis; peptidoglycan biosynthesis. In terms of biological role, cell wall formation. This Vibrio vulnificus (strain YJ016) protein is D-alanine--D-alanine ligase.